We begin with the raw amino-acid sequence, 430 residues long: Enolase (430 aa).

Q167 contributes to the (2R)-2-phosphoglycerate binding site. E209 serves as the catalytic Proton donor. Residues D246, E287, and D314 each contribute to the Mg(2+) site. (2R)-2-phosphoglycerate contacts are provided by K339, R368, S369, and K390. The Proton acceptor role is filled by K339.

This sequence belongs to the enolase family. Requires Mg(2+) as cofactor.

Its subcellular location is the cytoplasm. The protein resides in the secreted. The protein localises to the cell surface. The catalysed reaction is (2R)-2-phosphoglycerate = phosphoenolpyruvate + H2O. It functions in the pathway carbohydrate degradation; glycolysis; pyruvate from D-glyceraldehyde 3-phosphate: step 4/5. Functionally, catalyzes the reversible conversion of 2-phosphoglycerate (2-PG) into phosphoenolpyruvate (PEP). It is essential for the degradation of carbohydrates via glycolysis. The polypeptide is Enolase (Prochlorococcus marinus (strain AS9601)).